The sequence spans 592 residues: Bifunctional purine biosynthesis protein ATIC (592 aa).

Met1 carries the N-acetylmethionine modification. The MGS-like domain maps to 1 to 146 (MAPGHLALFS…KNHARVTVVC (146 aa)). Positions 1–198 (MAPGHLALFS…ISDYFRKQYS (198 aa)) are IMP cyclohydrolase. IMP is bound by residues 12–14 (SDK), 34–37 (SGGT), 64–67 (RVKT), 101–102 (CN), and 125–126 (DI). Catalysis depends on Lys137, which acts as the Proton donor/acceptor; for FAICAR cyclization activity. The residue at position 199 (Lys199) is an N6-acetyllysine. The tract at residues 199–592 (KGISQMPLRY…AHTNLRLFHH (394 aa)) is AICAR formyltransferase. Residues 207 to 208 (RY), His267, Gly316, Asp339, Asn431, and Arg451 each bind 5-amino-1-(5-phospho-beta-D-ribosyl)imidazole-4-carboxamide. The active-site Proton acceptor; for AICAR formyltransferase activity is His267. Residue Ile452 participates in (6R)-10-formyltetrahydrofolate binding. A 5-amino-1-(5-phospho-beta-D-ribosyl)imidazole-4-carboxamide-binding site is contributed by Phe541. Residues Asp546 and 565-566 (SA) each bind (6R)-10-formyltetrahydrofolate. Arg588 is a binding site for 5-amino-1-(5-phospho-beta-D-ribosyl)imidazole-4-carboxamide.

This sequence belongs to the PurH family. Homodimer. Associates with internalized INSR complexes on Golgi/endosomal membranes. Interacts with INSR; ATIC together with PRKAA2/AMPK2 and HACD3/PTPLAD1 is proposed to be part of a signaling network regulating INSR autophosphorylation and endocytosis.

It localises to the cytoplasm. It is found in the cytosol. The catalysed reaction is (6R)-10-formyltetrahydrofolate + 5-amino-1-(5-phospho-beta-D-ribosyl)imidazole-4-carboxamide = 5-formamido-1-(5-phospho-D-ribosyl)imidazole-4-carboxamide + (6S)-5,6,7,8-tetrahydrofolate. The enzyme catalyses 10-formyldihydrofolate + 5-amino-1-(5-phospho-beta-D-ribosyl)imidazole-4-carboxamide = 5-formamido-1-(5-phospho-D-ribosyl)imidazole-4-carboxamide + 7,8-dihydrofolate. It carries out the reaction IMP + H2O = 5-formamido-1-(5-phospho-D-ribosyl)imidazole-4-carboxamide. The protein operates within purine metabolism; IMP biosynthesis via de novo pathway; 5-formamido-1-(5-phospho-D-ribosyl)imidazole-4-carboxamide from 5-amino-1-(5-phospho-D-ribosyl)imidazole-4-carboxamide (10-formyl THF route): step 1/1. It participates in purine metabolism; IMP biosynthesis via de novo pathway; IMP from 5-formamido-1-(5-phospho-D-ribosyl)imidazole-4-carboxamide: step 1/1. AMP and XMP inhibit AICAR formyltransferase activity. Functionally, bifunctional enzyme that catalyzes the last two steps of purine biosynthesis. Acts as a transformylase that incorporates a formyl group to the AMP analog AICAR (5-amino-1-(5-phospho-beta-D-ribosyl)imidazole-4-carboxamide) to produce the intermediate formyl-AICAR (FAICAR). Can use both 10-formyldihydrofolate and 10-formyltetrahydrofolate as the formyl donor in this reaction. Also catalyzes the cyclization of FAICAR to inosine monophosphate (IMP). Promotes insulin receptor/INSR autophosphorylation and is involved in INSR internalization. This chain is Bifunctional purine biosynthesis protein ATIC (ATIC), found in Pongo abelii (Sumatran orangutan).